The sequence spans 183 residues: Capsid protein (183 aa).

The segment at 136–183 (NAPILSTLPETTVVRRRGRSPRRRTPSPRRRRSQSPRRRRSQSRESQC) is disordered. The segment covering 149–176 (VRRRGRSPRRRTPSPRRRRSQSPRRRRS) has biased composition (basic residues). Phosphoserine; by host occurs at positions 155, 162, and 170. One copy of the 1; half-length repeat lies at 155–161 (SPRRRTP). The 3 X 8 AA repeats of S-P-R-R-R-[PR]-S-Q stretch occupies residues 155–177 (SPRRRTPSPRRRRSQSPRRRRSQ). Positions 158–175 (RRTPSPRRRRSQSPRRRR) match the Bipartite nuclear localization signal motif. A run of 2 repeats spans residues 162-169 (SPRRRRSQ) and 170-177 (SPRRRRSQ). Residues 177–183 (QSRESQC) form an RNA binding region.

It belongs to the orthohepadnavirus core antigen family. As to quaternary structure, homodimerizes, then multimerizes. Interacts with cytosol exposed regions of viral L glycoprotein present in the reticulum-to-Golgi compartment. Interacts with human FLNB. Phosphorylated form interacts with host importin alpha; this interaction depends on the exposure of the NLS, which itself depends upon genome maturation and/or phosphorylation of the capsid protein. Interacts with host NUP153. Post-translationally, phosphorylated by host SRPK1, SRPK2, and maybe protein kinase C or GAPDH. Phosphorylation is critical for pregenomic RNA packaging. Protein kinase C phosphorylation is stimulated by HBx protein and may play a role in transport of the viral genome to the nucleus at the late step during the viral replication cycle.

The protein localises to the virion. The protein resides in the host cytoplasm. Its function is as follows. Self assembles to form an icosahedral capsid. Most capsids appear to be large particles with an icosahedral symmetry of T=4 and consist of 240 copies of capsid protein, though a fraction forms smaller T=3 particles consisting of 180 capsid proteins. Entering capsids are transported along microtubules to the nucleus. Phosphorylation of the capsid is thought to induce exposure of nuclear localization signal in the C-terminal portion of the capsid protein that allows binding to the nuclear pore complex via the importin (karyopherin-) alpha and beta. Capsids are imported in intact form through the nuclear pore into the nuclear basket, where it probably binds NUP153. Only capsids that contain the mature viral genome can release the viral DNA and capsid protein into the nucleoplasm. Immature capsids get stuck in the basket. Capsids encapsulate the pre-genomic RNA and the P protein. Pre-genomic RNA is reverse-transcribed into DNA while the capsid is still in the cytoplasm. The capsid can then either be directed to the nucleus, providing more genomes for transcription, or bud through the endoplasmic reticulum to provide new virions. This is Capsid protein from Hepatitis B virus genotype B1 subtype adw (isolate Japan/pJDW233/1988) (HBV-B).